Here is a 169-residue protein sequence, read N- to C-terminus: MSLRGRFYYCRHFRGRKQARRVGELPEVTELVSGPDWNPNTSQPMPGSPAPAPRRLPGCQRHPHPFKCCPVPAPQSLPSTTRPHLPPTPQGQASRWLFLFLFQKLRGETDVCVPDACRWRRRSRETRGENQSVRAAVRSPDQAFHALVSGSRGREGRLRPQCAGSAGGA.

Disordered stretches follow at residues V32–P53 and V148–A169.

This is an uncharacterized protein from Homo sapiens (Human).